The following is a 51-amino-acid chain: MRHHQNMHYAPQQQPVYVQQPPPRRESGGCCRTCCHFLCCLCLINLCCDVF.

Residues 1 to 28 (MRHHQNMHYAPQQQPVYVQQPPPRRESG) form a disordered region.

The protein belongs to the CYSTM1 family. In terms of processing, palmitoylated near the C-terminus.

Its subcellular location is the cell membrane. The sequence is that of Lipid-anchored plasma membrane protein CPP3 from Saccharomyces cerevisiae (strain ATCC 204508 / S288c) (Baker's yeast).